We begin with the raw amino-acid sequence, 389 residues long: S-adenosylmethionine synthase (389 aa).

Residue histidine 17 coordinates ATP. Mg(2+) is bound at residue aspartate 19. Residue glutamate 45 participates in K(+) binding. 2 residues coordinate L-methionine: glutamate 58 and glutamine 101. Residues 101–111 form a flexible loop region; sequence QSPDISQGVTE. ATP contacts are provided by residues 168 to 170, 234 to 235, aspartate 243, 249 to 250, alanine 266, and lysine 270; these read DSK, RF, and RK. Aspartate 243 is an L-methionine binding site. Lysine 274 serves as a coordination point for L-methionine.

Belongs to the AdoMet synthase family. In terms of assembly, homotetramer; dimer of dimers. The cofactor is Mg(2+). K(+) serves as cofactor.

Its subcellular location is the cytoplasm. The catalysed reaction is L-methionine + ATP + H2O = S-adenosyl-L-methionine + phosphate + diphosphate. Its pathway is amino-acid biosynthesis; S-adenosyl-L-methionine biosynthesis; S-adenosyl-L-methionine from L-methionine: step 1/1. Its function is as follows. Catalyzes the formation of S-adenosylmethionine (AdoMet) from methionine and ATP. The overall synthetic reaction is composed of two sequential steps, AdoMet formation and the subsequent tripolyphosphate hydrolysis which occurs prior to release of AdoMet from the enzyme. This is S-adenosylmethionine synthase from Geobacter sulfurreducens (strain ATCC 51573 / DSM 12127 / PCA).